A 256-amino-acid polypeptide reads, in one-letter code: Phosphatidylglycerol--prolipoprotein diacylglyceryl transferase (256 aa).

The next 3 membrane-spanning stretches (helical) occupy residues 19 to 39 (VHWYGLMYLIGFIGAWLLGYW), 56 to 76 (LIFYSALGVILGGRVGYMLFY), and 91 to 111 (IWEGGMSFHGGLLGVVIAAWL). R139 contributes to the a 1,2-diacyl-sn-glycero-3-phospho-(1'-sn-glycerol) binding site. A helical membrane pass occupies residues 231 to 251 (FGWLTMGQVLSIPMLLIGIWL).

It belongs to the Lgt family.

The protein resides in the cell inner membrane. It carries out the reaction L-cysteinyl-[prolipoprotein] + a 1,2-diacyl-sn-glycero-3-phospho-(1'-sn-glycerol) = an S-1,2-diacyl-sn-glyceryl-L-cysteinyl-[prolipoprotein] + sn-glycerol 1-phosphate + H(+). Its pathway is protein modification; lipoprotein biosynthesis (diacylglyceryl transfer). Catalyzes the transfer of the diacylglyceryl group from phosphatidylglycerol to the sulfhydryl group of the N-terminal cysteine of a prolipoprotein, the first step in the formation of mature lipoproteins. The sequence is that of Phosphatidylglycerol--prolipoprotein diacylglyceryl transferase from Legionella pneumophila (strain Paris).